We begin with the raw amino-acid sequence, 242 residues long: Ubiquinone biosynthesis O-methyltransferase (242 aa).

S-adenosyl-L-methionine is bound by residues Arg-44, Gly-64, Asp-85, and Met-129.

Belongs to the methyltransferase superfamily. UbiG/COQ3 family.

It catalyses the reaction a 3-demethylubiquinol + S-adenosyl-L-methionine = a ubiquinol + S-adenosyl-L-homocysteine + H(+). The enzyme catalyses a 3-(all-trans-polyprenyl)benzene-1,2-diol + S-adenosyl-L-methionine = a 2-methoxy-6-(all-trans-polyprenyl)phenol + S-adenosyl-L-homocysteine + H(+). It participates in cofactor biosynthesis; ubiquinone biosynthesis. Its function is as follows. O-methyltransferase that catalyzes the 2 O-methylation steps in the ubiquinone biosynthetic pathway. The protein is Ubiquinone biosynthesis O-methyltransferase of Salmonella arizonae (strain ATCC BAA-731 / CDC346-86 / RSK2980).